The following is a 325-amino-acid chain: Transaldolase (325 aa).

Lys-125 functions as the Schiff-base intermediate with substrate in the catalytic mechanism.

The protein belongs to the transaldolase family. Type 2 subfamily.

Its subcellular location is the cytoplasm. The catalysed reaction is D-sedoheptulose 7-phosphate + D-glyceraldehyde 3-phosphate = D-erythrose 4-phosphate + beta-D-fructose 6-phosphate. It participates in carbohydrate degradation; pentose phosphate pathway; D-glyceraldehyde 3-phosphate and beta-D-fructose 6-phosphate from D-ribose 5-phosphate and D-xylulose 5-phosphate (non-oxidative stage): step 2/3. Functionally, transaldolase is important for the balance of metabolites in the pentose-phosphate pathway. In Campylobacter jejuni subsp. jejuni serotype O:2 (strain ATCC 700819 / NCTC 11168), this protein is Transaldolase (tal).